Here is a 425-residue protein sequence, read N- to C-terminus: Serine--tRNA ligase (425 aa).

Thr-231–Glu-233 is an L-serine binding site. Arg-262–Glu-264 is an ATP binding site. Glu-285 contributes to the L-serine binding site. ATP is bound at residue Glu-349–Ser-352. Ser-385 lines the L-serine pocket.

This sequence belongs to the class-II aminoacyl-tRNA synthetase family. Type-1 seryl-tRNA synthetase subfamily. As to quaternary structure, homodimer. The tRNA molecule binds across the dimer.

It localises to the cytoplasm. It catalyses the reaction tRNA(Ser) + L-serine + ATP = L-seryl-tRNA(Ser) + AMP + diphosphate + H(+). The catalysed reaction is tRNA(Sec) + L-serine + ATP = L-seryl-tRNA(Sec) + AMP + diphosphate + H(+). The protein operates within aminoacyl-tRNA biosynthesis; selenocysteinyl-tRNA(Sec) biosynthesis; L-seryl-tRNA(Sec) from L-serine and tRNA(Sec): step 1/1. Its function is as follows. Catalyzes the attachment of serine to tRNA(Ser). Is also able to aminoacylate tRNA(Sec) with serine, to form the misacylated tRNA L-seryl-tRNA(Sec), which will be further converted into selenocysteinyl-tRNA(Sec). The chain is Serine--tRNA ligase from Bacillus velezensis (strain DSM 23117 / BGSC 10A6 / LMG 26770 / FZB42) (Bacillus amyloliquefaciens subsp. plantarum).